The following is a 345-amino-acid chain: Cytoskeleton protein RodZ (345 aa).

Topologically, residues 1-111 (MNTEASQDQT…LGKKHKKRDG (111 aa)) are cytoplasmic. The HTH cro/C1-type domain maps to 19–79 (LRQARESLGL…KLVHLPEDEL (61 aa)). The H-T-H motif DNA-binding region spans 30 to 49 (QQTVAERLCLKVSTIRDIEE). The chain crosses the membrane as a helical; Signal-anchor for type II membrane protein span at residues 112 to 132 (WLMSFTWLIVLVVLGLTGAWW). Residues 133 to 345 (WQNHQAQQAE…RVARLTVGVE (213 aa)) lie on the Periplasmic side of the membrane. The tract at residues 151 to 260 (SAQLSQNGGQ…LPTADAGVSG (110 aa)) is disordered. Residues 188-225 (PLTNHSGSAITNSATTSSVPKTTSTEPVDTANTNTTMH) are compositionally biased toward polar residues. The segment covering 229-241 (AASAAVSPSQVPQ) has biased composition (low complexity).

The protein belongs to the RodZ family.

It localises to the cell inner membrane. Cytoskeletal protein that is involved in cell-shape control through regulation of the length of the long axis. This chain is Cytoskeleton protein RodZ, found in Yersinia pestis (strain Pestoides F).